The chain runs to 37 residues: Cytochrome b6-f complex subunit 5 (37 aa).

Residues 5-25 (LLSGVVLGLILVTLSGLFFAA) form a helical membrane-spanning segment.

Belongs to the PetG family. The 4 large subunits of the cytochrome b6-f complex are cytochrome b6, subunit IV (17 kDa polypeptide, PetD), cytochrome f and the Rieske protein, while the 4 small subunits are PetG, PetL, PetM and PetN. The complex functions as a dimer.

The protein resides in the cellular thylakoid membrane. In terms of biological role, component of the cytochrome b6-f complex, which mediates electron transfer between photosystem II (PSII) and photosystem I (PSI), cyclic electron flow around PSI, and state transitions. PetG is required for either the stability or assembly of the cytochrome b6-f complex. This Trichodesmium erythraeum (strain IMS101) protein is Cytochrome b6-f complex subunit 5.